Consider the following 423-residue polypeptide: Glutaminase (423 aa).

Residues 27 to 312 (GEVAQYIPQL…LSEDMGLHLM (286 aa)) are glutaminase. The substrate site is built by S69, N119, E165, N172, Y196, Y248, and V266. Positions 321–423 (AVRAIEERGD…SPQVDDPEEL (103 aa)) constitute an STAS domain.

The protein belongs to the glutaminase family. In terms of assembly, homotetramer.

It carries out the reaction L-glutamine + H2O = L-glutamate + NH4(+). This chain is Glutaminase (glsA), found in Corynebacterium efficiens (strain DSM 44549 / YS-314 / AJ 12310 / JCM 11189 / NBRC 100395).